A 275-amino-acid polypeptide reads, in one-letter code: Large ribosomal subunit protein uL2c (275 aa).

2 disordered regions span residues 1-30 (MAIH…QKQK) and 225-275 (MNPV…RRRK). Positions 21 to 30 (QAKSTPQKQK) are enriched in polar residues.

Belongs to the universal ribosomal protein uL2 family. Part of the 50S ribosomal subunit.

The protein resides in the plastid. It is found in the chloroplast. The chain is Large ribosomal subunit protein uL2c (rpl2) from Illicium oligandrum (Star anise).